Reading from the N-terminus, the 359-residue chain is UDP-3-O-acylglucosamine N-acyltransferase (359 aa).

Catalysis depends on His256, which acts as the Proton acceptor.

It belongs to the transferase hexapeptide repeat family. LpxD subfamily. As to quaternary structure, homotrimer.

The enzyme catalyses a UDP-3-O-[(3R)-3-hydroxyacyl]-alpha-D-glucosamine + a (3R)-hydroxyacyl-[ACP] = a UDP-2-N,3-O-bis[(3R)-3-hydroxyacyl]-alpha-D-glucosamine + holo-[ACP] + H(+). It participates in bacterial outer membrane biogenesis; LPS lipid A biosynthesis. Its function is as follows. Catalyzes the N-acylation of UDP-3-O-acylglucosamine using 3-hydroxyacyl-ACP as the acyl donor. Is involved in the biosynthesis of lipid A, a phosphorylated glycolipid that anchors the lipopolysaccharide to the outer membrane of the cell. The chain is UDP-3-O-acylglucosamine N-acyltransferase from Rhodopseudomonas palustris (strain BisB5).